A 101-amino-acid polypeptide reads, in one-letter code: Osteocalcin (101 aa).

The first 18 residues, 1–18 (MKLAIVLLLLGLAVLCLG), serve as a signal peptide directing secretion. Residues 19–52 (GKDSQHSASAGDSRSSEAFISRQDSANFARRHKR) constitute a propeptide that is removed on maturation. The 47-residue stretch at 53 to 99 (SYRYNVARGAAVTSPLESQREVCELNPDCDELADHIGFQEAYRRFYG) folds into the Gla domain. The Ca(2+) site is built by E69, E73, E76, and D82. E69, E73, and E76 each carry 4-carboxyglutamate. C75 and C81 are joined by a disulfide.

The protein belongs to the osteocalcin/matrix Gla protein family. Post-translationally, gamma-carboxyglutamate residues are formed by vitamin K dependent carboxylation by GGCX. These residues are essential for the binding of calcium.

It localises to the secreted. The carboxylated form is one of the main organic components of the bone matrix, which constitutes 1-2% of the total bone protein. The carboxylated form binds strongly to apatite and calcium. The chain is Osteocalcin (bglap) from Xenopus tropicalis (Western clawed frog).